We begin with the raw amino-acid sequence, 223 residues long: Cytotoxic T-lymphocyte protein 4 (223 aa).

The first 35 residues, 1–35 (MACLGLRRYKAQLQLPSRTWPFVALLTLLFIPVFS), serve as a signal peptide directing secretion. The 110-residue stretch at 36–145 (EAIQVTQPSV…PPPYFVGMGN (110 aa)) folds into the Ig-like V-type domain. The Extracellular portion of the chain corresponds to 36–161 (EAIQVTQPSV…IDPEPCPDSD (126 aa)). The segment at 46–50 (VLASS) is homodimerization. Disulfide bonds link Cys58/Cys129 and Cys85/Cys103. N-linked (GlcNAc...) asparagine glycosylation is found at Asn108 and Asn113. The interval 134–139 (MYPPPY) is important for interaction with CD80 and CD86. Asn145 is a glycosylation site (N-linked (GlcNAc...) asparagine). Residues 150 to 155 (YVIDPE) form a homodimerization region. Residues 162–182 (FLLWILVAVSLGLFFYSFLVS) traverse the membrane as a helical segment. The Cytoplasmic portion of the chain corresponds to 183–223 (AVSLSKMLKKRSPLTTGVYVKMPPTEPECEKQFQPYFIPIN). A Phosphotyrosine; by TXK and JAK2 modification is found at Tyr201.

In terms of assembly, homodimer; disulfide-linked. Binds to CD80/B7-1 and CD86/B7.2. Interacts with ICOSLG. Post-translationally, N-glycosylation is important for dimerization. Phosphorylation at Tyr-201 prevents binding to the AP-2 adapter complex, blocks endocytosis, and leads to retention of CTLA4 on the cell surface. Widely expressed with highest levels in lymphoid tissues.

Its subcellular location is the cell membrane. In terms of biological role, inhibitory receptor acting as a major negative regulator of T-cell responses. The affinity of CTLA4 for its natural B7 family ligands, CD80 and CD86, is considerably stronger than the affinity of their cognate stimulatory coreceptor CD28. The protein is Cytotoxic T-lymphocyte protein 4 (Ctla4) of Mus musculus (Mouse).